Consider the following 435-residue polypeptide: Glutamate-1-semialdehyde 2,1-aminomutase (435 aa).

K266 carries the N6-(pyridoxal phosphate)lysine modification.

This sequence belongs to the class-III pyridoxal-phosphate-dependent aminotransferase family. HemL subfamily. In terms of assembly, homodimer. Pyridoxal 5'-phosphate is required as a cofactor.

It localises to the cytoplasm. The enzyme catalyses (S)-4-amino-5-oxopentanoate = 5-aminolevulinate. Its pathway is porphyrin-containing compound metabolism; protoporphyrin-IX biosynthesis; 5-aminolevulinate from L-glutamyl-tRNA(Glu): step 2/2. This chain is Glutamate-1-semialdehyde 2,1-aminomutase, found in Coxiella burnetii (strain Dugway 5J108-111).